The chain runs to 768 residues: Photosystem I P700 chlorophyll a apoprotein A1 (768 aa).

A run of 8 helical transmembrane segments spans residues 76–99 (VFSAHFGHLAVIFIWMSAAFFHGA), 162–185 (LMALAIGALLMAAIMLHGGIYHYH), 201–225 (LNHHIAGLVGLGSIAWAGHCIHIGA), 310–328 (ISHHHLAFGVLAVLGGHLY), 369–392 (WHAQLGLNLAMIGSLSIIISHHMY), 408–434 (LGLFTHHMWIGGLFIVGAAAHAGIAMI), 456–478 (ALISHLNWACMFLGFHSFGLYIH), and 559–577 (FMIHHIHAFTIHVTLLILL). Cysteine 601 and cysteine 610 together coordinate [4Fe-4S] cluster. 2 consecutive transmembrane segments (helical) span residues 617 to 638 (HVFLGLFWMYNGLSVVIFHFSW) and 682 to 704 (ISMYGLMFLGAHFVWAFSLMFLF). Histidine 693 provides a ligand contact to divinylchlorophyll a'. Residues methionine 701 and tyrosine 709 each contribute to the divinyl chlorophyll a site. Residue tryptophan 710 participates in phylloquinone binding. The helical transmembrane segment at 742-762 (AVGAAHFLLGGIATTWAFFHA) threads the bilayer.

Belongs to the PsaA/PsaB family. In terms of assembly, the PsaA/B heterodimer binds the P700 divinyl chlorophyll special pair and subsequent electron acceptors. PSI consists of a core antenna complex that captures photons, and an electron transfer chain that converts photonic excitation into a charge separation. The cyanobacterial PSI reaction center is composed of one copy each of PsaA,B,C,D,E,F,I,J,K,L,M and X, and forms trimeric complexes. Requires PSI electron transfer chain: 5 divinyl chlorophyll a, 1 divinyl chlorophyll a', 2 phylloquinones and 3 4Fe-4S clusters. PSI core antenna: 90 divinyl chlorophyll a, 22 carotenoids, 3 phospholipids and 1 galactolipid. P700 is a divinyl chlorophyll a/divinyl chlorophyll a' dimer, A0 is one or more divinyl chlorophyll a, A1 is one or both phylloquinones and FX is a shared 4Fe-4S iron-sulfur center. as cofactor.

It is found in the cellular thylakoid membrane. The catalysed reaction is reduced [plastocyanin] + hnu + oxidized [2Fe-2S]-[ferredoxin] = oxidized [plastocyanin] + reduced [2Fe-2S]-[ferredoxin]. Its function is as follows. PsaA and PsaB bind P700, the primary electron donor of photosystem I (PSI), as well as the electron acceptors A0, A1 and FX. PSI is a plastocyanin/cytochrome c6-ferredoxin oxidoreductase, converting photonic excitation into a charge separation, which transfers an electron from the donor P700 chlorophyll pair to the spectroscopically characterized acceptors A0, A1, FX, FA and FB in turn. Oxidized P700 is reduced on the lumenal side of the thylakoid membrane by plastocyanin or cytochrome c6. This is Photosystem I P700 chlorophyll a apoprotein A1 from Prochlorococcus marinus (strain NATL2A).